Reading from the N-terminus, the 832-residue chain is Ventricular zone-expressed PH domain-containing protein homolog 1 (832 aa).

Residues 201–319 (AELLALMSQL…RYLVSQLANM (119 aa)) form an interaction with TGFBR1 region. A disordered region spans residues 497 to 519 (DTHGSQLRNSSASHPSIIHSEPE). Over residues 499-510 (HGSQLRNSSASH) the composition is skewed to polar residues. Residues 663–832 (ESTFPQQKDL…RESREVTTYL (170 aa)) form an interaction with TGFBR1 region. A PH domain is found at 716-818 (QPLIEGKLKE…WLQCINVALA (103 aa)).

The protein belongs to the MELT/VEPH family. As to quaternary structure, interacts with TGFBR1.

The protein resides in the cell membrane. Interacts with TGF-beta receptor type-1 (TGFBR1) and inhibits dissociation of activated SMAD2 from TGFBR1, impeding its nuclear accumulation and resulting in impaired TGF-beta signaling. May also affect FOXO, Hippo and Wnt signaling. This is Ventricular zone-expressed PH domain-containing protein homolog 1 (Veph1) from Rattus norvegicus (Rat).